A 280-amino-acid polypeptide reads, in one-letter code: Diaminopimelate epimerase (280 aa).

2 residues coordinate substrate: N13 and N66. C75 (proton donor) is an active-site residue. Substrate-binding positions include 76-77 (GN), N165, N198, and 216-217 (ER). The Proton acceptor role is filled by C225. 226–227 (GT) serves as a coordination point for substrate.

This sequence belongs to the diaminopimelate epimerase family. Homodimer.

It localises to the cytoplasm. It carries out the reaction (2S,6S)-2,6-diaminopimelate = meso-2,6-diaminopimelate. It participates in amino-acid biosynthesis; L-lysine biosynthesis via DAP pathway; DL-2,6-diaminopimelate from LL-2,6-diaminopimelate: step 1/1. In terms of biological role, catalyzes the stereoinversion of LL-2,6-diaminopimelate (L,L-DAP) to meso-diaminopimelate (meso-DAP), a precursor of L-lysine and an essential component of the bacterial peptidoglycan. The polypeptide is Diaminopimelate epimerase (Cyanothece sp. (strain PCC 7425 / ATCC 29141)).